A 526-amino-acid chain; its full sequence is ATP-dependent RNA helicase DBP3 (526 aa).

Over residues 1–33 (MVEEHKNKKRRQEDGPADVPEKKVKVSKSEKKD) the composition is skewed to basic and acidic residues. The interval 1 to 86 (MVEEHKNKKR…SSQGYTQSES (86 aa)) is disordered. Positions 34-65 (KKEKKEKKEKKEKKEKKEKKEKKEKKEKKKKY) are enriched in basic residues. Polar residues predominate over residues 69 to 86 (ATISGSAQSSQGYTQSES). The Q motif motif lies at 118–144 (LSFDQIQLNSKISAVVNKFPTPTPIQS). The region spanning 147–318 (WPYLLSGKDV…STFMNQPVKV (172 aa)) is the Helicase ATP-binding domain. 160-167 (AETGSGKT) provides a ligand contact to ATP. The short motif at 265–268 (DEAD) is the DEAD box element. The 163-residue stretch at 334 to 496 (QIVEVIEPFD…PVPDELLKFG (163 aa)) folds into the Helicase C-terminal domain.

This sequence belongs to the DEAD box helicase family. DDX5/DBP2 subfamily.

The protein resides in the nucleus. It is found in the nucleolus. The enzyme catalyses ATP + H2O = ADP + phosphate + H(+). ATP-dependent RNA helicase required for 60S ribosomal subunit synthesis. Involved in efficient pre-rRNA processing, predominantly at site A3, which is necessary for the normal formation of 25S and 5.8S rRNAs. This chain is ATP-dependent RNA helicase DBP3 (DBP3), found in Scheffersomyces stipitis (strain ATCC 58785 / CBS 6054 / NBRC 10063 / NRRL Y-11545) (Yeast).